The chain runs to 311 residues: Ribosomal RNA small subunit methyltransferase H (311 aa).

S-adenosyl-L-methionine-binding positions include 33–35, D51, F78, D99, and Q106; that span reads GGH. The disordered stretch occupies residues 289 to 311; sequence EEIEKNRRAHSAKLRAAEKLSFA.

It belongs to the methyltransferase superfamily. RsmH family.

The protein resides in the cytoplasm. It carries out the reaction cytidine(1402) in 16S rRNA + S-adenosyl-L-methionine = N(4)-methylcytidine(1402) in 16S rRNA + S-adenosyl-L-homocysteine + H(+). Functionally, specifically methylates the N4 position of cytidine in position 1402 (C1402) of 16S rRNA. The chain is Ribosomal RNA small subunit methyltransferase H from Carboxydothermus hydrogenoformans (strain ATCC BAA-161 / DSM 6008 / Z-2901).